A 236-amino-acid chain; its full sequence is Probable chemoreceptor glutamine deamidase CheD (236 aa).

Residues 1–20 are disordered; that stretch reads MIEFGKRATPQSAADAVRGD.

It belongs to the CheD family.

The enzyme catalyses L-glutaminyl-[protein] + H2O = L-glutamyl-[protein] + NH4(+). Its function is as follows. Probably deamidates glutamine residues to glutamate on methyl-accepting chemotaxis receptors (MCPs), playing an important role in chemotaxis. In Ralstonia pickettii (strain 12J), this protein is Probable chemoreceptor glutamine deamidase CheD.